A 205-amino-acid polypeptide reads, in one-letter code: Probable ADP-ribosylation factor At2g15310 (205 aa).

G2 carries N-myristoyl glycine lipidation. GTP contacts are provided by residues 24-31 (GLDGSGKT), 67-71 (DIGGQ), and 126-129 (NKQD).

It belongs to the small GTPase superfamily. Arf family.

The protein localises to the golgi apparatus. In terms of biological role, GTP-binding protein involved in protein trafficking; may modulate vesicle budding and uncoating within the Golgi apparatus. The sequence is that of Probable ADP-ribosylation factor At2g15310 from Arabidopsis thaliana (Mouse-ear cress).